The primary structure comprises 568 residues: MDQDAFILKEDSEVERKAPGGRESLSDVIGFLDAVLSSEPTDIGGDRSWLHNTINTSQGPGSAHRAKSEGEGEVSTPSTQDNRSGEESRVSGRTSKPEAEAHAGNLDKQNIHWAFRGRTGTNSVSQDLGDGGDSGILENPPNERGYPRSGIEDENREMAAHPDKRGEDQAEGLPEEVRGGTSLPDEGEGGASNNGRSMEPGSSHSARVTGVLVIPSPELEEAVLRRNKRRPTNSGSKPLTPATVPGTRSPPLNRYNSTGPPPGKPPSTQDEHINSGDTPAVRVKDRKPPIGTRSVSDCPANGRPIHPGIETDSTKKGIGENTSSMKEMATLLTGLGVIQSAQEFESSRDASYVFARRALKSANYAEMTFNVCGLILSAEKSSARKVDENKQLLKQIQENVESFRDIYKRFSEYQKEQNSLLMSNLSTLHIITDRGGKTDNTDSLTRSPSVFAKSKENKTKATRFDPSMETLEDMKYKPDLIREDEFRDEIRNPVYQERDTEPRASNASRLFPSKEKPTMHSLRLVIESSPLSRAEKAAYVKSLSKCKTDQEVKAVMELVEEDIESLTN.

2 disordered regions span residues Met-1–Arg-22 and Pro-40–Glu-320. Basic and acidic residues predominate over residues Ile-7–Gly-20. An N0 binding region spans residues Asp-33 to Thr-41. Residues Leu-50 to Pro-60 are compositionally biased toward polar residues. A Phosphoserine; by host modification is found at Ser-68. A compositionally biased stretch (basic and acidic residues) spans Arg-83–Ala-101. Residue Ser-125 is modified to Phosphoserine; by host. Basic and acidic residues predominate over residues Gly-150–Asp-168. Positions Ala-191–Ala-206 are enriched in polar residues. 3 positions are modified to phosphoserine; by host: Ser-192, Ser-249, and Ser-257. The multimerization stretch occupies residues Phe-344–Ser-411. The stretch at Tyr-364–His-429 forms a coiled coil. Residues Glu-412–Thr-445 are l protein binding. A phosphoserine; by host mark is found at Ser-447 and Ser-449. The interval Asp-479–Asn-568 is interaction with the nucleocapsid (N-RNA).

Belongs to the respirovirus P protein family. In terms of assembly, homotetramer. Interacts (via multimerization domain) with polymerase L; this interaction forms the polymerase complex. Interacts (via N-terminus) with N0; this interaction allows P to chaperon N0 before encapsidation and form the N-P complex. Interacts (via C-terminus) with N-RNA template; this interaction positions the polymerase on the template. In terms of processing, phosphorylated by PKC/PRKCZ, and other unknown kinases. Phosphorylation is necessary for viral transcription and replication. The N-terminus contains the majority of phosphorylated sites. Ser-249 is the major site of phosphorylation, but is not necessary for most functions.

The protein localises to the host cytoplasm. Essential cofactor of the RNA polymerase L that plays a central role in the transcription and replication by forming the polymerase complex with RNA polymerase L and recruiting L to the genomic N-RNA template for RNA synthesis. Also plays a central role in the encapsidation of nascent RNA chains by forming the encapsidation complex with the nucleocapsid protein N (N-P complex). Acts as a chaperone for newly synthesized free N protein, so-called N0, allowing encapsidation of nascent RNA chains during replication. The nucleoprotein protein N prevents excessive phosphorylation of P, which leads to down-regulation of viral transcription/ replication. Participates, together with N, in the formation of viral factories (viroplasms), which are large inclusions in the host cytoplasm where replication takes place. Recruits host PI4KB and remodel the host endoplasmic reticulum membrane to form viral replication factories. The sequence is that of Phosphoprotein (P/V/C) from Sendai virus (strain 6/94) (SeV).